We begin with the raw amino-acid sequence, 249 residues long: DNA repair protein RecO (249 aa).

The protein belongs to the RecO family.

Involved in DNA repair and RecF pathway recombination. In Rhodopseudomonas palustris (strain BisB5), this protein is DNA repair protein RecO.